A 234-amino-acid chain; its full sequence is Leucyl/phenylalanyl-tRNA--protein transferase (234 aa).

It belongs to the L/F-transferase family.

The protein localises to the cytoplasm. It carries out the reaction N-terminal L-lysyl-[protein] + L-leucyl-tRNA(Leu) = N-terminal L-leucyl-L-lysyl-[protein] + tRNA(Leu) + H(+). The catalysed reaction is N-terminal L-arginyl-[protein] + L-leucyl-tRNA(Leu) = N-terminal L-leucyl-L-arginyl-[protein] + tRNA(Leu) + H(+). The enzyme catalyses L-phenylalanyl-tRNA(Phe) + an N-terminal L-alpha-aminoacyl-[protein] = an N-terminal L-phenylalanyl-L-alpha-aminoacyl-[protein] + tRNA(Phe). Its function is as follows. Functions in the N-end rule pathway of protein degradation where it conjugates Leu, Phe and, less efficiently, Met from aminoacyl-tRNAs to the N-termini of proteins containing an N-terminal arginine or lysine. The chain is Leucyl/phenylalanyl-tRNA--protein transferase from Pectobacterium carotovorum subsp. carotovorum (strain PC1).